The chain runs to 378 residues: MFSSIYGYFNSEGDSNQQQNNNNNSNNNLKESVFHSGISNGIIETVGNTPLIRIKSLSEATGCEIYGKAEFMNPGGSPKDRVAREIILDGEKKGLLKKGSTIVEATAGSTGISLTMLGKSRGYNVQLFIPDNVSKEKVDLLEMLGAETKIVPIVGMNNANHFMHCAYQRCLGDDMAFYANQFDNLSNFNAHYNGTAKEIWEQTKGDVDGFVAAAGTGGTVAGISSYLKEVNPNIQNWLIDPPGSGLYSLVNTGVIFHPKDRLVVEKLGPRSFYEGVGVNKKTENFNKASLNGAFRGTEEEGVDMAHYLLKHDGLFLGGSSALNCVGAVKLARKLGPGKTIVTVLCDSGHRYTSRLYSKSWLNDHNFQVSDLSNLNFVK.

A disordered region spans residues 10–31; it reads NSEGDSNQQQNNNNNSNNNLKE. Over residues 15–28 the composition is skewed to low complexity; that stretch reads SNQQQNNNNNSNNN. An N6-(pyridoxal phosphate)lysine modification is found at lysine 79. Pyridoxal 5'-phosphate is bound by residues 215–219 and serine 319; that span reads GTGGT.

It belongs to the cysteine synthase/cystathionine beta-synthase family. Pyridoxal 5'-phosphate serves as cofactor.

The enzyme catalyses O-acetyl-L-serine + hydrogen sulfide = L-cysteine + acetate. The protein operates within amino-acid biosynthesis; L-cysteine biosynthesis; L-cysteine from L-serine: step 2/2. The protein is Cysteine synthase (cysK) of Dictyostelium discoideum (Social amoeba).